We begin with the raw amino-acid sequence, 286 residues long: 2-hydroxy-6-oxo-6-phenylhexa-2,4-dienoate hydrolase (286 aa).

Residues 36–271 form the AB hydrolase-1 domain; the sequence is VIMLHGGGPG…RCGHWAQWEH (236 aa). Substrate is bound by residues 42–43, asparagine 51, asparagine 111, serine 180, and arginine 190; that span reads GG. Histidine 265 functions as the Proton acceptor in the catalytic mechanism. Tryptophan 266 provides a ligand contact to substrate.

This sequence belongs to the AB hydrolase superfamily. BphD family. As to quaternary structure, homodimer.

It carries out the reaction 2,6-dioxo-6-phenylhexa-3-enoate + H2O = 2-oxopent-4-enoate + benzoate + H(+). It participates in xenobiotic degradation; biphenyl degradation; 2-hydroxy-2,4-pentadienoate and benzoate from biphenyl: step 4/4. Catalyzes an unusual C-C bond hydrolysis of 2-hydroxy-6-oxo-6-phenylhexa-2,4-dienoic acid (HOPDA) to produce benzoic acid and 2-hydroxy-2,4-pentadienoic acid (HPD). This Burkholderia cepacia (Pseudomonas cepacia) protein is 2-hydroxy-6-oxo-6-phenylhexa-2,4-dienoate hydrolase.